We begin with the raw amino-acid sequence, 388 residues long: Mannitol-1-phosphate 5-dehydrogenase (388 aa).

5 to 16 (AVHFGGGNIGRG) is a binding site for NAD(+). The active site involves lysine 213.

It belongs to the mannitol dehydrogenase family. Monomer.

The catalysed reaction is D-mannitol 1-phosphate + NAD(+) = beta-D-fructose 6-phosphate + NADH + H(+). Catalyzes the NAD(H)-dependent interconversion of D-fructose 6-phosphate and D-mannitol 1-phosphate in the mannitol metabolic pathway. The sequence is that of Mannitol-1-phosphate 5-dehydrogenase from Penicillium rubens (strain ATCC 28089 / DSM 1075 / NRRL 1951 / Wisconsin 54-1255) (Penicillium chrysogenum).